The following is an 86-amino-acid chain: Cell division topological specificity factor (86 aa).

This sequence belongs to the MinE family.

Functionally, prevents the cell division inhibition by proteins MinC and MinD at internal division sites while permitting inhibition at polar sites. This ensures cell division at the proper site by restricting the formation of a division septum at the midpoint of the long axis of the cell. This is Cell division topological specificity factor from Albidiferax ferrireducens (strain ATCC BAA-621 / DSM 15236 / T118) (Rhodoferax ferrireducens).